The following is a 553-amino-acid chain: MNDIEISQNAEMLPIQTIAKQAGFDEKVVEPYGHYKAKIDIFSEKPNTQLGKLVLVTSINPTPAGEGKSTVTVGLGDALNDLTGSAMIALREPSQGPVMGMKGGATGGGYSQVIPMDDINLHFTGDMHALTAANNTLAALIDNHLQQGNELNIDPRTIVWRRCLDINDRALRNIVIGLGGRFSGVPREDKFDITVASELMAILCLAQDLKDLKERINRILIANNYDGQPIFVKDLHVGGAIATLLKDAIKPNLVQTLGHTPAIIHGGPFANIAHGCNSVLATKTALRHAKYTVTEAGFGADLGAEKFLDIKTPVLGKQPDAIVIVATVRALKYNGGAKLADLKIEDVEALQKGYINLQRHIKNMQRYNIPVTVSINHFISDTDQEVNTLVKLIEAEGISAIVTDAWAKGGAGSKDLANEVIALADTNQGPMTKLYDNNGRIEDKIKTIVQKIYGGSDVEYSPQALKKIKECVANGWDHLPICMAKSQYSFSDDPKQLGAPSDFVMHVNDINIRLGAGFLVVQTGKVLTMPGLPKHPAALDIDIDSKGEITGLF.

ATP is bound at residue 62-69 (TPAGEGKS).

The protein belongs to the formate--tetrahydrofolate ligase family.

The enzyme catalyses (6S)-5,6,7,8-tetrahydrofolate + formate + ATP = (6R)-10-formyltetrahydrofolate + ADP + phosphate. Its pathway is one-carbon metabolism; tetrahydrofolate interconversion. The chain is Formate--tetrahydrofolate ligase from Pediococcus pentosaceus (strain ATCC 25745 / CCUG 21536 / LMG 10740 / 183-1w).